Reading from the N-terminus, the 322-residue chain is HPr kinase/phosphorylase (322 aa).

Catalysis depends on residues H146 and K167. An ATP-binding site is contributed by 161 to 168 (GDSGLGKS). S168 contacts Mg(2+). D185 functions as the Proton acceptor; for phosphorylation activity. Proton donor; for dephosphorylation activity in the catalytic mechanism. The tract at residues 209–218 (LEVRGLGLLD) is important for the catalytic mechanism of both phosphorylation and dephosphorylation. E210 contributes to the Mg(2+) binding site. Residue R250 is part of the active site. The interval 271-276 (QVAAGR) is important for the catalytic mechanism of dephosphorylation.

It belongs to the HPrK/P family. Homohexamer. Requires Mg(2+) as cofactor.

It carries out the reaction [HPr protein]-L-serine + ATP = [HPr protein]-O-phospho-L-serine + ADP + H(+). It catalyses the reaction [HPr protein]-O-phospho-L-serine + phosphate + H(+) = [HPr protein]-L-serine + diphosphate. Catalyzes the ATP- as well as the pyrophosphate-dependent phosphorylation of a specific serine residue in HPr, a phosphocarrier protein of the phosphoenolpyruvate-dependent sugar phosphotransferase system (PTS). HprK/P also catalyzes the pyrophosphate-producing, inorganic phosphate-dependent dephosphorylation (phosphorolysis) of seryl-phosphorylated HPr (P-Ser-HPr). The polypeptide is HPr kinase/phosphorylase (Paraburkholderia phytofirmans (strain DSM 17436 / LMG 22146 / PsJN) (Burkholderia phytofirmans)).